The sequence spans 388 residues: Outer membrane protein assembly factor BamB (388 aa).

The N-terminal stretch at 1 to 21 (MILGWTQRIFTLLVVVTLLAA) is a signal peptide. Residue cysteine 22 is the site of N-palmitoyl cysteine attachment. Cysteine 22 carries S-diacylglycerol cysteine lipidation.

The protein belongs to the BamB family. In terms of assembly, part of the Bam complex.

Its subcellular location is the cell outer membrane. Functionally, part of the outer membrane protein assembly complex, which is involved in assembly and insertion of beta-barrel proteins into the outer membrane. The chain is Outer membrane protein assembly factor BamB from Kangiella koreensis (strain DSM 16069 / JCM 12317 / KCTC 12182 / SW-125).